Consider the following 388-residue polypeptide: UPF0496 protein 1 (388 aa).

Positions 1-25 (MGNSSSSGSHRPPRPASSESALPPA) are disordered. Residues 198–227 (QAVYRQQLTMLEKLQQRKHRLDKKVRAIKA) are a coiled coil. 2 helical membrane-spanning segments follow: residues 234–254 (IIFA…AAIA) and 257–277 (PVAA…GKWI). Residues 344 to 376 (VEEIKKKLEVFMKSVEDLGEQADRCSRDIRRAR) adopt a coiled-coil conformation.

Belongs to the UPF0496 family.

The protein resides in the membrane. The polypeptide is UPF0496 protein 1 (Oryza sativa subsp. japonica (Rice)).